The primary structure comprises 703 residues: UvrABC system protein B (703 aa).

Positions 33–419 constitute a Helicase ATP-binding domain; it reads ERIENGENDV…SDGVVEQIIR (387 aa). 46 to 53 contributes to the ATP binding site; sequence GATGTGKT. Positions 99 to 122 match the Beta-hairpin motif; that stretch reads YYDYYQPEAYIPQTDTYIEKDSNI. One can recognise a Helicase C-terminal domain in the interval 436–589; it reads QIDDLLAEIK…QIAYNQEHGI (154 aa). A UVR domain is found at 659-694; it reads ADLIRQLSEQMHTAAEQLQFELAARLRDEIRDLKKE.

The protein belongs to the UvrB family. In terms of assembly, forms a heterotetramer with UvrA during the search for lesions. Interacts with UvrC in an incision complex.

It is found in the cytoplasm. Functionally, the UvrABC repair system catalyzes the recognition and processing of DNA lesions. A damage recognition complex composed of 2 UvrA and 2 UvrB subunits scans DNA for abnormalities. Upon binding of the UvrA(2)B(2) complex to a putative damaged site, the DNA wraps around one UvrB monomer. DNA wrap is dependent on ATP binding by UvrB and probably causes local melting of the DNA helix, facilitating insertion of UvrB beta-hairpin between the DNA strands. Then UvrB probes one DNA strand for the presence of a lesion. If a lesion is found the UvrA subunits dissociate and the UvrB-DNA preincision complex is formed. This complex is subsequently bound by UvrC and the second UvrB is released. If no lesion is found, the DNA wraps around the other UvrB subunit that will check the other stand for damage. The protein is UvrABC system protein B of Bifidobacterium longum (strain NCC 2705).